Here is an 836-residue protein sequence, read N- to C-terminus: CUB domain-containing protein 1 (836 aa).

A signal peptide spans 1 to 29 (MAGLNCGVSIALLGVLLLGAARLPRGAEA). Over 30–667 (FEIALPRESN…TLTPRTVDLT (638 aa)) the chain is Extracellular. 7 N-linked (GlcNAc...) asparagine glycosylation sites follow: asparagine 39, asparagine 122, asparagine 180, asparagine 205, asparagine 270, asparagine 310, and asparagine 386. Residues 417–544 (CTDHRYCQRK…VSFIPYFKEE (128 aa)) form the CUB domain. Cysteine 476 and cysteine 499 are disulfide-bonded. A helical membrane pass occupies residues 668 to 688 (VILIAAVGGGVLLLSALGLII). Over 689–836 (CCVKKKKKKT…NTQEPMEPAE (148 aa)) the chain is Cytoplasmic. The residue at position 734 (tyrosine 734) is a Phosphotyrosine. The tract at residues 776 to 836 (PPTICSRAPT…NTQEPMEPAE (61 aa)) is disordered.

As to quaternary structure, interacts with CDH2/N-cadherin, CDH3/P-cadherin, SDC1/syndecan-1, SDC4/syndecan-4 and the serine protease ST14/MT-SP1. Also interacts with SRC and PRKCG/protein kinase C gamma. Phosphorylated on tyrosine by kinases of the SRC family such as SRC and YES as well as by the protein kinase C gamma/PRKCG. Dephosphorylated by phosphotyrosine phosphatases. Also phosphorylated by suramin, a heparin analog. Tyrosine phosphorylated in response to dissociation of integrin alpha-6 beta-4 from laminin-5. In terms of processing, N-glycosylated. Post-translationally, a soluble form may also be produced by proteolytic cleavage at the cell surface (shedding). Another peptide of 80 kDa (p80) is present in cultured keratinocytes probably due to tryptic cleavage at an unidentified site on its N-terminal side. Converted to p80 by plasmin, a trypsin-like protease. Highly expressed in mitotic cells with low expression during interphase. Detected at highest levels in skeletal muscle and colon with lower levels in kidney, small intestine, placenta and lung. Up-regulated in a number of human tumor cell lines, as well as in colorectal cancer, breast carcinoma and lung cancer. Also expressed in cells with phenotypes reminiscent of mesenchymal stem cells and neural stem cells.

The protein localises to the cell membrane. The protein resides in the secreted. In terms of biological role, may be involved in cell adhesion and cell matrix association. May play a role in the regulation of anchorage versus migration or proliferation versus differentiation via its phosphorylation. May be a novel marker for leukemia diagnosis and for immature hematopoietic stem cell subsets. Belongs to the tetraspanin web involved in tumor progression and metastasis. The polypeptide is CUB domain-containing protein 1 (CDCP1) (Homo sapiens (Human)).